A 361-amino-acid chain; its full sequence is Alanine racemase (361 aa).

Lys35 (proton acceptor; specific for D-alanine) is an active-site residue. At Lys35 the chain carries N6-(pyridoxal phosphate)lysine. Position 130 (Arg130) interacts with substrate. The active-site Proton acceptor; specific for L-alanine is the Tyr257. A substrate-binding site is contributed by Met305.

It belongs to the alanine racemase family. It depends on pyridoxal 5'-phosphate as a cofactor.

The enzyme catalyses L-alanine = D-alanine. It functions in the pathway amino-acid biosynthesis; D-alanine biosynthesis; D-alanine from L-alanine: step 1/1. Its function is as follows. Catalyzes the interconversion of L-alanine and D-alanine. May also act on other amino acids. In Nitrosomonas eutropha (strain DSM 101675 / C91 / Nm57), this protein is Alanine racemase (alr).